Consider the following 154-residue polypeptide: Transcriptional repressor NrdR (154 aa).

A zinc finger spans residues 3–34; that stretch reads CPFCSAHDTKVIDSRLVAEGDQVRRRRECQAC. The 91-residue stretch at 49 to 139 folds into the ATP-cone domain; that stretch reads PRVIKQDGSR…VYRRFQDLNE (91 aa).

The protein belongs to the NrdR family. The cofactor is Zn(2+).

Its function is as follows. Negatively regulates transcription of bacterial ribonucleotide reductase nrd genes and operons by binding to NrdR-boxes. This chain is Transcriptional repressor NrdR, found in Azotobacter vinelandii (strain DJ / ATCC BAA-1303).